Reading from the N-terminus, the 445-residue chain is Phosphoglucosamine mutase (445 aa).

The Phosphoserine intermediate role is filled by serine 99. The Mg(2+) site is built by serine 99, aspartate 242, aspartate 244, and aspartate 246. Serine 99 is subject to Phosphoserine.

The protein belongs to the phosphohexose mutase family. Mg(2+) is required as a cofactor. Activated by phosphorylation.

It catalyses the reaction alpha-D-glucosamine 1-phosphate = D-glucosamine 6-phosphate. Functionally, catalyzes the conversion of glucosamine-6-phosphate to glucosamine-1-phosphate. The sequence is that of Phosphoglucosamine mutase from Campylobacter jejuni (strain RM1221).